We begin with the raw amino-acid sequence, 81 residues long: Photosystem I iron-sulfur center (81 aa).

4Fe-4S ferredoxin-type domains lie at 2–31 (SHSVKVYDTCIGCTQCVRACPCDVLEMVSW) and 39–68 (IASAPRTEDCIGCKRCETACPTDFLSVRVY). [4Fe-4S] cluster is bound by residues Cys-11, Cys-14, Cys-17, Cys-21, Cys-48, Cys-51, Cys-54, and Cys-58.

In terms of assembly, the eukaryotic PSI reaction center is composed of at least 11 subunits. [4Fe-4S] cluster serves as cofactor.

Its subcellular location is the plastid. It localises to the chloroplast thylakoid membrane. The enzyme catalyses reduced [plastocyanin] + hnu + oxidized [2Fe-2S]-[ferredoxin] = oxidized [plastocyanin] + reduced [2Fe-2S]-[ferredoxin]. Functionally, apoprotein for the two 4Fe-4S centers FA and FB of photosystem I (PSI); essential for photochemical activity. FB is the terminal electron acceptor of PSI, donating electrons to ferredoxin. The C-terminus interacts with PsaA/B/D and helps assemble the protein into the PSI complex. Required for binding of PsaD and PsaE to PSI. PSI is a plastocyanin/cytochrome c6-ferredoxin oxidoreductase, converting photonic excitation into a charge separation, which transfers an electron from the donor P700 chlorophyll pair to the spectroscopically characterized acceptors A0, A1, FX, FA and FB in turn. The chain is Photosystem I iron-sulfur center from Rhodomonas salina (Cryptomonas salina).